The sequence spans 104 residues: Large ribosomal subunit protein uL24 (104 aa).

The protein belongs to the universal ribosomal protein uL24 family. As to quaternary structure, part of the 50S ribosomal subunit.

One of two assembly initiator proteins, it binds directly to the 5'-end of the 23S rRNA, where it nucleates assembly of the 50S subunit. Its function is as follows. One of the proteins that surrounds the polypeptide exit tunnel on the outside of the subunit. The chain is Large ribosomal subunit protein uL24 from Psychromonas ingrahamii (strain DSM 17664 / CCUG 51855 / 37).